A 207-amino-acid chain; its full sequence is Peptidyl-tRNA hydrolase (207 aa).

Tyrosine 14 contributes to the tRNA binding site. Histidine 19 serves as the catalytic Proton acceptor. 3 residues coordinate tRNA: tyrosine 64, asparagine 66, and asparagine 112.

Belongs to the PTH family. Monomer.

It localises to the cytoplasm. The enzyme catalyses an N-acyl-L-alpha-aminoacyl-tRNA + H2O = an N-acyl-L-amino acid + a tRNA + H(+). Functionally, hydrolyzes ribosome-free peptidyl-tRNAs (with 1 or more amino acids incorporated), which drop off the ribosome during protein synthesis, or as a result of ribosome stalling. Its function is as follows. Catalyzes the release of premature peptidyl moieties from peptidyl-tRNA molecules trapped in stalled 50S ribosomal subunits, and thus maintains levels of free tRNAs and 50S ribosomes. The sequence is that of Peptidyl-tRNA hydrolase from Rhodopseudomonas palustris (strain HaA2).